A 287-amino-acid polypeptide reads, in one-letter code: Nucleotide-binding protein Gbem_0872 (287 aa).

8 to 15 contacts ATP; it reads GLSGSGKS. 59–62 lines the GTP pocket; that stretch reads DIRS.

The protein belongs to the RapZ-like family.

Its function is as follows. Displays ATPase and GTPase activities. The sequence is that of Nucleotide-binding protein Gbem_0872 from Citrifermentans bemidjiense (strain ATCC BAA-1014 / DSM 16622 / JCM 12645 / Bem) (Geobacter bemidjiensis).